The chain runs to 687 residues: Chloride channel protein ClC-Ka (687 aa).

The next 4 membrane-spanning stretches (helical) occupy residues 52-72 (FLMT…FAIG), 161-181 (LFLG…AYLG), 202-222 (VAAA…GVLF), and 236-256 (YWRG…LAVF). 4 residues coordinate Ca(2+): E259, E261, D278, and E281. Transmembrane regions (helical) follow at residues 282–302 (IFFF…YLFC), 329–349 (ALAT…HFLA), 396–416 (FTIF…LILA), 417–437 (TTIP…AAIG), 452–472 (IVTG…AGAA), and 486–506 (LLAF…MAVL). Over 507-687 (AANAIAQSCQ…SNLTNPPAPK (181 aa)) the chain is Cytoplasmic. CBS domains lie at 551 to 609 (MNHS…EPPS) and 626 to 684 (CPTE…TNPP).

Belongs to the chloride channel (TC 2.A.49) family. CLCNKA subfamily. As to quaternary structure, homodimer. Interacts with BSND.

The protein resides in the basolateral cell membrane. It carries out the reaction chloride(in) = chloride(out). The enzyme catalyses bromide(in) = bromide(out). It catalyses the reaction nitrate(in) = nitrate(out). The catalysed reaction is iodide(out) = iodide(in). With respect to regulation, activated by extracellular Ca(2+) and inhibited by extracellular acidic pH. In terms of biological role, anion-selective channel permeable to small monovalent anions with ion selectivity for chloride &gt; bromide &gt; nitrate &gt; iodide. Forms a homodimeric channel where each subunit has its own ion conduction pathway. May conduct double-barreled currents controlled by two types of gates, two fast gates that control each subunit independently and a slow common gate that opens and shuts off both subunits simultaneously. Assembles with the regulatory subunit BSND/Barttin for sorting at the basolateral plasma membrane domain and functional switch to the ion conducting state. CLCNKA:BSND channels display mostly a linear current-voltage relationship with fast gating at negative potentials. Mediates transepithelial chloride transport from the lumen to interstitial compartment along the thin ascending limb of Henle's loop, contributing to generation of hypertonic medullary interstitium as a countercurrent system to achieve urine concentration. Conducts chloride currents in the stria vascularis of the inner ear to establish the endocochlear potential necessary for normal hearing. The sequence is that of Chloride channel protein ClC-Ka from Homo sapiens (Human).